The chain runs to 57 residues: uncharacterized protein (57 aa).

The chain crosses the membrane as a helical span at residues 15–37 (GLAGLICIGLTISSGFSGSSILI).

The protein localises to the membrane. This is an uncharacterized protein from Dictyostelium discoideum (Social amoeba).